Reading from the N-terminus, the 143-residue chain is Ribosome maturation factor RimP (143 aa).

This sequence belongs to the RimP family.

It is found in the cytoplasm. In terms of biological role, required for maturation of 30S ribosomal subunits. This Neisseria gonorrhoeae (strain ATCC 700825 / FA 1090) protein is Ribosome maturation factor RimP.